The chain runs to 212 residues: Thymidylate kinase (212 aa).

11–18 (GLEGAGKT) contributes to the ATP binding site.

The protein belongs to the thymidylate kinase family.

It catalyses the reaction dTMP + ATP = dTDP + ADP. Its function is as follows. Phosphorylation of dTMP to form dTDP in both de novo and salvage pathways of dTTP synthesis. The chain is Thymidylate kinase (tmk) from Buchnera aphidicola subsp. Acyrthosiphon pisum (strain APS) (Acyrthosiphon pisum symbiotic bacterium).